A 592-amino-acid chain; its full sequence is UvrABC system protein C (592 aa).

A GIY-YIG domain is found at 15 to 92; it reads ALPGCYLMKD…IQKHQPYFNI (78 aa). Positions 197–232 constitute a UVR domain; the sequence is DNVKKDLTEKMATAAQEMQFERAAELRDQLRYIEAT.

Belongs to the UvrC family. Interacts with UvrB in an incision complex.

It localises to the cytoplasm. Its function is as follows. The UvrABC repair system catalyzes the recognition and processing of DNA lesions. UvrC both incises the 5' and 3' sides of the lesion. The N-terminal half is responsible for the 3' incision and the C-terminal half is responsible for the 5' incision. This chain is UvrABC system protein C, found in Latilactobacillus sakei subsp. sakei (strain 23K) (Lactobacillus sakei subsp. sakei).